The chain runs to 213 residues: Glutathione S-transferase PARB (213 aa).

The GST N-terminal domain occupies 1-82; it reads MAIKVHGSPM…YIAHVYADNG (82 aa). Residues S11, 12–13, 40–41, 53–54, and 66–67 each bind glutathione; these read TA, HK, QV, and ES. In terms of domain architecture, GST C-terminal spans 89–213; it reads DPKKMPSMSV…WVKGLEKLQK (125 aa).

The protein belongs to the GST superfamily. Phi family.

It carries out the reaction RX + glutathione = an S-substituted glutathione + a halide anion + H(+). Its function is as follows. Conjugation of reduced glutathione to a wide number of exogenous and endogenous hydrophobic electrophiles. This is Glutathione S-transferase PARB from Nicotiana tabacum (Common tobacco).